We begin with the raw amino-acid sequence, 428 residues long: Flotillin-1 (428 aa).

Phosphoserine is present on residues S19, S163, and S385. T387 bears the Phosphothreonine mark.

The protein belongs to the band 7/mec-2 family. Flotillin subfamily. In terms of assembly, heterooligomeric complex of flotillin-1 and flotillin-2 and caveolin-1 and caveolin-2. Interacts with ECPAS. High expression in brain, white adipose tissue, heart muscle, skeletal muscle and lung. Low expression in spleen, liver and testis.

It localises to the cell membrane. Its subcellular location is the endosome. The protein localises to the membrane. It is found in the caveola. The protein resides in the melanosome. It localises to the membrane raft. Functionally, may act as a scaffolding protein within caveolar membranes, functionally participating in formation of caveolae or caveolae-like vesicles. This Mus musculus (Mouse) protein is Flotillin-1 (Flot1).